Consider the following 428-residue polypeptide: Aerobic C4-dicarboxylate transport protein (428 aa).

A run of 9 helical transmembrane segments spans residues 5–27 (LFKS…GHYY), 47–64 (MIIA…IAGM), 77–99 (ALLY…VNVV), 141–163 (VIGA…FGFA), 184–206 (VIFG…AMAF), 216–238 (LVQL…VVVL), 289–311 (VVGL…YLTM), 326–348 (IFHQ…GVTG), and 353–375 (VLAA…ILGI).

It belongs to the dicarboxylate/amino acid:cation symporter (DAACS) (TC 2.A.23) family.

It is found in the cell inner membrane. Responsible for the transport of dicarboxylates such as succinate, fumarate, and malate from the periplasm across the membrane. This chain is Aerobic C4-dicarboxylate transport protein, found in Salmonella typhi.